We begin with the raw amino-acid sequence, 362 residues long: Ribosomal RNA large subunit methyltransferase M (362 aa).

S-adenosyl-L-methionine-binding positions include S187, 220 to 223, D239, D259, and D276; that span reads CPGG. K305 functions as the Proton acceptor in the catalytic mechanism.

Belongs to the class I-like SAM-binding methyltransferase superfamily. RNA methyltransferase RlmE family. RlmM subfamily. Monomer.

The protein localises to the cytoplasm. It catalyses the reaction cytidine(2498) in 23S rRNA + S-adenosyl-L-methionine = 2'-O-methylcytidine(2498) in 23S rRNA + S-adenosyl-L-homocysteine + H(+). Its function is as follows. Catalyzes the 2'-O-methylation at nucleotide C2498 in 23S rRNA. The polypeptide is Ribosomal RNA large subunit methyltransferase M (Shewanella frigidimarina (strain NCIMB 400)).